Reading from the N-terminus, the 179-residue chain is Large ribosomal subunit protein uL5 (179 aa).

The protein belongs to the universal ribosomal protein uL5 family. In terms of assembly, part of the 50S ribosomal subunit; part of the 5S rRNA/L5/L18/L25 subcomplex. Contacts the 5S rRNA and the P site tRNA. Forms a bridge to the 30S subunit in the 70S ribosome.

This is one of the proteins that bind and probably mediate the attachment of the 5S RNA into the large ribosomal subunit, where it forms part of the central protuberance. In the 70S ribosome it contacts protein S13 of the 30S subunit (bridge B1b), connecting the 2 subunits; this bridge is implicated in subunit movement. Contacts the P site tRNA; the 5S rRNA and some of its associated proteins might help stabilize positioning of ribosome-bound tRNAs. This chain is Large ribosomal subunit protein uL5, found in Rickettsia prowazekii (strain Madrid E).